Reading from the N-terminus, the 626-residue chain is MDYTHLLPYEIWLNIIDFLDKDKYNLYLTNTNFFSLLDYSREYFNLIDFIIETKSMEVLKYIYQSKTNGLIRNRFVKNITLNTSLLTSCQNGNILLVKFFIEKGANHRYSEDKPLGIAAANGHSDIVEYLVNGGANIKSRNNYALRFAVKNGHYNMVKFLIEQGVDITVFDYEVFYTSCEYGHYEIFVYLMKNINDIKKLNKKRLLKKAFKGGSVKIVHYIFNDILDVYRMFYHSMTRSELKNYKLLNIIGKYGNHDILEYLHNRYQLSDTNNIAQVAALYGHFRIVKFLLDKYLHELNLNQLIISACDNGSIKMVKFLIEKGIDINTIGNSCLSHAILSGNTDLLHYLTNIGCRLTSLENFFMKNLVSFYDIETINYLRNYITFDDQHYINTIMSTSMYCGIIKLVKYFVDKSSLDYESYICGIISNGHVNIIKYLLNQNKITKQNITITINNSVILTIIQYGHIDMLKYLVSLGINICINYALDRAVSYGHLNIVEYLLELGHNINEFGDLPLRSATIANNINMVKYLVSQGANIYIIKDNPIYLASIHGHVKLVKYFIDLGSDYHKKNELPLYVAIINNNLDVVKCLVEHGCKTKTTFFDPIETAMEYYNNEIVEYLQNNEIK.

ANK repeat units lie at residues 42-72 (EYFN…GLIR), 80-109 (TLNT…NHRY), 110-139 (SEDK…NIKS), 140-169 (RNNY…DITV), 171-199 (DYEV…DIKK), 201-230 (NKKR…DVYR), 242-269 (KNYK…YQLS), 270-298 (DTNN…LHEL), 299-328 (NLNQ…DINT), 330-358 (GNSC…RLTS), 393-416 (TIMS…KSSL), 417-446 (DYES…ITKQ), 452-479 (INNS…GINI), 480-509 (CINY…NINE), 510-539 (FGDL…NIYI), 540-569 (IKDN…DYHK), 570-599 (KNEL…KTKT), and 601-626 (FFDP…NEIK).

In Acanthamoeba polyphaga (Amoeba), this protein is Putative ankyrin repeat protein R837.